A 351-amino-acid chain; its full sequence is Phosphate acetyltransferase (351 aa).

It belongs to the phosphate acetyltransferase and butyryltransferase family.

The protein localises to the cytoplasm. The enzyme catalyses acetyl-CoA + phosphate = acetyl phosphate + CoA. The protein operates within metabolic intermediate biosynthesis; acetyl-CoA biosynthesis; acetyl-CoA from acetate: step 2/2. The polypeptide is Phosphate acetyltransferase (pta) (Rickettsia prowazekii (strain Madrid E)).